Consider the following 292-residue polypeptide: Aquaporin PIP1-3/PIP1-4 (292 aa).

A disordered region spans residues 1-42 (MEGKEEDVRLGANKFSERQPIGTAAQGAGAGDDDKDYKEPPP). 2 helical membrane passes run 61–81 (IAEF…VMGV) and 96–118 (IAWS…SGGH). The short motif at 120–122 (NPA) is the NPA 1 element. 3 helical membrane-spanning segments follow: residues 139-159 (IFYI…VKGF), 181-201 (GDGL…VFSA), and 215-235 (ILAP…TIPI). The NPA 2 signature appears at 241–243 (NPA). A helical membrane pass occupies residues 263-283 (IFWVGPFIGAALAAIYHQVII).

This sequence belongs to the MIP/aquaporin (TC 1.A.8) family. PIP (TC 1.A.8.11) subfamily.

The protein resides in the cell membrane. In terms of biological role, aquaporins facilitate the transport of water and small neutral solutes across cell membranes. The polypeptide is Aquaporin PIP1-3/PIP1-4 (PIP1-3) (Zea mays (Maize)).